A 372-amino-acid chain; its full sequence is L-selectin (372 aa).

The N-terminal stretch at 1–28 (MVFPWRCEGTYWGSRNILKLWVWTLLCC) is a signal peptide. Residues 29–38 (DFLIHHGTHC) constitute a propeptide that is removed on maturation. Over 39 to 332 (WTYHYSEKPM…FSKIKEGDYN (294 aa)) the chain is Extracellular. A C-type lectin domain is found at 55–155 (KFCKQNYTDL…ACHKRKAALC (101 aa)). 10 disulfides stabilise this stretch: cysteine 57/cysteine 155, cysteine 128/cysteine 147, cysteine 128/cysteine 160, cysteine 160/cysteine 171, cysteine 165/cysteine 180, cysteine 182/cysteine 191, cysteine 197/cysteine 241, cysteine 227/cysteine 254, cysteine 259/cysteine 303, and cysteine 289/cysteine 316. 2 N-linked (GlcNAc...) asparagine glycosylation sites follow: asparagine 60 and asparagine 104. 5 residues coordinate Ca(2+): glutamate 118, asparagine 120, glutamate 126, asparagine 143, and aspartate 144. The EGF-like domain maps to 156 to 192 (YTASCQPGSCNGRGECVETINNHTCICDAGYYGPQCQ). N-linked (GlcNAc...) asparagine glycosylation occurs at asparagine 177. 2 Sushi domains span residues 195–256 (VQCE…ICQV) and 257–318 (VQCE…ICQE). N-linked (GlcNAc...) asparagine glycans are attached at residues asparagine 216, asparagine 226, asparagine 246, asparagine 278, asparagine 288, asparagine 308, and asparagine 320. A helical transmembrane segment spans residues 333–355 (PLFIPVAVMVTAFSGLAFLIWLA). The Cytoplasmic portion of the chain corresponds to 356–372 (RRLKKGKKSQERMDDPY).

This sequence belongs to the selectin/LECAM family. Interaction with SELPLG/PSGL1 and PODXL2 is required for promoting recruitment and rolling of leukocytes. This interaction is dependent on the sialyl Lewis X glycan modification of SELPLG and PODXL2, and tyrosine sulfation modifications of SELPLG. Sulfation on 'Tyr-51' of SELPLG is important for L-selectin binding. In terms of processing, N-glycosylated. In terms of tissue distribution, predominantly expressed in lymphoid tissue.

It localises to the cell membrane. Its function is as follows. Calcium-dependent lectin that mediates cell adhesion by binding to glycoproteins on neighboring cells. Mediates the adherence of lymphocytes to endothelial cells of high endothelial venules in peripheral lymph nodes. Promotes initial tethering and rolling of leukocytes in endothelia. The chain is L-selectin (Sell) from Mus musculus (Mouse).